The chain runs to 190 residues: Double zinc ribbon protein MJ0416 (190 aa).

The DZANK-type zinc-finger motif lies at 134–183 (CPNCNNYISDSWKYCAHCGAKLKEEEEEVLRCPNCKRPVQPEWIVCPYCG).

This Methanocaldococcus jannaschii (strain ATCC 43067 / DSM 2661 / JAL-1 / JCM 10045 / NBRC 100440) (Methanococcus jannaschii) protein is Double zinc ribbon protein MJ0416.